The primary structure comprises 197 residues: Probable GTP-binding protein EngB (197 aa).

Residues 22 to 197 (TGVEVAFAGR…LKEKLDIWYQ (176 aa)) enclose the EngB-type G domain. GTP is bound by residues 30 to 37 (GRSNAGKS), 57 to 61 (GRTQL), 75 to 78 (DLPG), 142 to 145 (TKAD), and 177 to 179 (FSS). Positions 37 and 59 each coordinate Mg(2+).

The protein belongs to the TRAFAC class TrmE-Era-EngA-EngB-Septin-like GTPase superfamily. EngB GTPase family. It depends on Mg(2+) as a cofactor.

Functionally, necessary for normal cell division and for the maintenance of normal septation. This chain is Probable GTP-binding protein EngB, found in Francisella philomiragia subsp. philomiragia (strain ATCC 25017 / CCUG 19701 / FSC 153 / O#319-036).